The following is an 872-amino-acid chain: Leucine-rich repeat-containing protein 66 (872 aa).

Residues Phe4–Pro24 form a helical membrane-spanning segment. 2 N-linked (GlcNAc...) asparagine glycosylation sites follow: Asn45 and Asn108. LRR repeat units lie at residues Arg142 to Lys164, Ser165 to Gly186, Gln189 to Gly210, Lys213 to Ala234, and His239 to Gln259. The tract at residues Leu339–Asp363 is disordered. Residues Glu349–Asp363 are compositionally biased toward basic and acidic residues. A helical transmembrane segment spans residues Leu371–Ala391. A compositionally biased stretch (polar residues) spans Gln467–Glu483. Disordered stretches follow at residues Gln467–Ser501, Gly560–Arg579, Asn695–Ile761, and Leu776–Trp872. The N-linked (GlcNAc...) asparagine glycan is linked to Asn472. A compositionally biased stretch (basic and acidic residues) spans Gln484–Ser493. Ser718 is subject to Phosphoserine. 3 stretches are compositionally biased toward polar residues: residues Ser725–Pro736, Ser746–Arg760, and Cys785–Pro805. Ser752 bears the Phosphoserine mark. Residues Val831 to Glu841 show a composition bias toward basic and acidic residues.

It localises to the membrane. In Mus musculus (Mouse), this protein is Leucine-rich repeat-containing protein 66 (Lrrc66).